The sequence spans 126 residues: Spermidine export protein MdtJ (126 aa).

Helical transmembrane passes span 1 to 21 (MIYW…TLSM), 30 to 50 (ITGH…LSLA), 54 to 74 (VALG…ITLF), and 81 to 101 (EPFS…IVML).

This sequence belongs to the drug/metabolite transporter (DMT) superfamily. Small multidrug resistance (SMR) (TC 2.A.7.1) family. MdtJ subfamily. Forms a complex with MdtI.

Its subcellular location is the cell inner membrane. Functionally, catalyzes the excretion of spermidine. This is Spermidine export protein MdtJ from Sodalis glossinidius (strain morsitans).